The primary structure comprises 266 residues: tRNA (guanine-N(1)-)-methyltransferase (266 aa).

S-adenosyl-L-methionine is bound by residues glycine 113 and 137–142 (LGDYVL).

This sequence belongs to the RNA methyltransferase TrmD family. As to quaternary structure, homodimer.

Its subcellular location is the cytoplasm. The catalysed reaction is guanosine(37) in tRNA + S-adenosyl-L-methionine = N(1)-methylguanosine(37) in tRNA + S-adenosyl-L-homocysteine + H(+). In terms of biological role, specifically methylates guanosine-37 in various tRNAs. This is tRNA (guanine-N(1)-)-methyltransferase from Paenarthrobacter aurescens (strain TC1).